The primary structure comprises 96 residues: uncharacterized protein (96 aa).

The N-terminal stretch at 1–19 (MKFLSALLLIVLLISVVFG) is a signal peptide. An N-linked (GlcNAc...) asparagine glycan is attached at Asn-20. Low complexity predominate over residues 27–46 (AWATTTTGGTTGSQTSPATH). The disordered stretch occupies residues 27–58 (AWATTTTGGTTGSQTSPATHGGHGGNGGNGHS). A compositionally biased stretch (gly residues) spans 47–56 (GGHGGNGGNG).

The protein resides in the secreted. This is an uncharacterized protein from Dictyostelium discoideum (Social amoeba).